Reading from the N-terminus, the 82-residue chain is MSPKVQALLLLVGLITFLEVHAEEELSETVESERSCAKEYQWCDWNTRPCCDNISCICSWIGTNCECKKGIICTIKDWYKGK.

The first 22 residues, 1 to 22 (MSPKVQALLLLVGLITFLEVHA), serve as a signal peptide directing secretion. A propeptide spanning residues 23–34 (EEELSETVESER) is cleaved from the precursor. 4 disulfide bridges follow: Cys36/Cys51, Cys43/Cys56, Cys50/Cys67, and Cys58/Cys65.

It belongs to the neurotoxin 02 (plectoxin) family. 04 (U16-lycotoxin) subfamily. Expressed by the venom gland.

Its subcellular location is the secreted. The protein is U16-lycotoxin-Ls1b of Lycosa singoriensis (Wolf spider).